The primary structure comprises 149 residues: Large ribosomal subunit protein bL9 (149 aa).

Belongs to the bacterial ribosomal protein bL9 family.

Functionally, binds to the 23S rRNA. The protein is Large ribosomal subunit protein bL9 of Alkaliphilus metalliredigens (strain QYMF).